A 141-amino-acid polypeptide reads, in one-letter code: Hydroperoxide reductase (141 aa).

It belongs to the OsmC/Ohr family. In terms of assembly, homodimer.

It is found in the cytoplasm. In terms of biological role, reduces organic and inorganic peroxide substrates. Protects the cell against oxidative stress. The sequence is that of Hydroperoxide reductase from Mycoplasma pneumoniae (strain ATCC 29342 / M129 / Subtype 1) (Mycoplasmoides pneumoniae).